Reading from the N-terminus, the 239-residue chain is UPF0173 metal-dependent hydrolase Dvul_0081 (239 aa).

It belongs to the UPF0173 family.

The protein is UPF0173 metal-dependent hydrolase Dvul_0081 of Nitratidesulfovibrio vulgaris (strain DP4) (Desulfovibrio vulgaris).